Here is a 29-residue protein sequence, read N- to C-terminus: Galanin (29 aa).

Alanine amide is present on A29.

Belongs to the galanin family.

It is found in the secreted. Its function is as follows. Contracts smooth muscle of the gastrointestinal and genitourinary tract, regulates growth hormone release, modulates insulin release, and may be involved in the control of adrenal secretion. This chain is Galanin (gal), found in Pelophylax ridibundus (Marsh frog).